A 38-amino-acid polypeptide reads, in one-letter code: Photosystem II reaction center protein L (38 aa).

A helical transmembrane segment spans residues 17-37 (SLFWGLLLIFVLAILFSSYIF).

The protein belongs to the PsbL family. As to quaternary structure, PSII is composed of 1 copy each of membrane proteins PsbA, PsbB, PsbC, PsbD, PsbE, PsbF, PsbH, PsbI, PsbJ, PsbK, PsbL, PsbM, PsbT, PsbX, PsbY, PsbZ, Psb30/Ycf12, at least 3 peripheral proteins of the oxygen-evolving complex and a large number of cofactors. It forms dimeric complexes.

It is found in the plastid. The protein resides in the cyanelle thylakoid membrane. One of the components of the core complex of photosystem II (PSII). PSII is a light-driven water:plastoquinone oxidoreductase that uses light energy to abstract electrons from H(2)O, generating O(2) and a proton gradient subsequently used for ATP formation. It consists of a core antenna complex that captures photons, and an electron transfer chain that converts photonic excitation into a charge separation. This subunit is found at the monomer-monomer interface and is required for correct PSII assembly and/or dimerization. This is Photosystem II reaction center protein L from Cyanophora paradoxa.